Reading from the N-terminus, the 310-residue chain is Tagatose-6-phosphate kinase (310 aa).

Belongs to the carbohydrate kinase PfkB family. LacC subfamily.

The catalysed reaction is D-tagatofuranose 6-phosphate + ATP = D-tagatofuranose 1,6-bisphosphate + ADP + H(+). It participates in carbohydrate metabolism; D-tagatose 6-phosphate degradation; D-glyceraldehyde 3-phosphate and glycerone phosphate from D-tagatose 6-phosphate: step 1/2. This Streptococcus agalactiae serotype Ia (strain ATCC 27591 / A909 / CDC SS700) protein is Tagatose-6-phosphate kinase.